The primary structure comprises 673 residues: MAETTKIFESHLVKQALKDSVLKLYPVYMIKNPIMFVVEVGMLLALGLTIYPDLFHQESVSRLYVFSIFIILLLTLVFANFSEALAEGRGKAQANALRQTQTEMKARRIKQDGSYEMIDASDLKKGHIVRVATGEQIPNDGKVIKGLATVDESAITGESAPVIKESGGDFDNVIGGTSVASDWLEVEITSEPGHSFLDKMIGLVEGATRKKTPNEIALFTLLMTLTIIFLVVILTMYPLAKFLNFNLSIAMLIALAVCLIPTTIGGLLSAIGIAGMDRVTQFNILAKSGRSVETCGDVNVLILDKTGTITYGNRMADAFIPVKSSSFERLVKAAYESSIADDTPEGRSIVKLAYKQHIDLPQEVGEYIPFTAETRMSGVKFTTREVYKGAPNSMVKRVKEAGGHIPVDLDALVKGVSKKGGTPLVVLEDNEILGVIYLKDVIKDGLVERFRELREMGIETVMCTGDNELTAATIAKEAGVDRFVAECKPEDKINVIREEQAKGHIVAMTGDGTNDAPALAEANVGLAMNSGTMSAKEAANLIDLDSNPTKLMEVVLIGKQLLMTRGSLTTFSIANDIAKYFAILPAMFMAAMPAMNHLNIMHLHSPESAVLSALIFNALIIVLLIPIAMKGVKFKGASTQTILMKNMLVYGLGGMIVPFIGIKLIDLIIQLFV.

4 consecutive transmembrane segments (helical) span residues 34–54, 65–85, 216–236, and 253–273; these read IMFVVEVGMLLALGLTIYPDL, VFSIFIILLLTLVFANFSEAL, IALFTLLMTLTIIFLVVILTM, and IALAVCLIPTTIGGLLSAIGI. D304 (4-aspartylphosphate intermediate) is an active-site residue. ATP contacts are provided by residues D341, E345, 370–377, and K388; that span reads FTAETRMS. Residues D511 and D515 each coordinate Mg(2+). The next 3 membrane-spanning stretches (helical) occupy residues 581–601, 609–629, and 649–669; these read FAILPAMFMAAMPAMNHLNIM, AVLSALIFNALIIVLLIPIAM, and VYGLGGMIVPFIGIKLIDLII.

Belongs to the cation transport ATPase (P-type) (TC 3.A.3) family. Type IA subfamily. The system is composed of three essential subunits: KdpA, KdpB and KdpC.

It localises to the cell membrane. It catalyses the reaction K(+)(out) + ATP + H2O = K(+)(in) + ADP + phosphate + H(+). Part of the high-affinity ATP-driven potassium transport (or Kdp) system, which catalyzes the hydrolysis of ATP coupled with the electrogenic transport of potassium into the cytoplasm. This subunit is responsible for energy coupling to the transport system and for the release of the potassium ions to the cytoplasm. This Staphylococcus epidermidis (strain ATCC 35984 / DSM 28319 / BCRC 17069 / CCUG 31568 / BM 3577 / RP62A) protein is Potassium-transporting ATPase ATP-binding subunit.